The chain runs to 459 residues: ERBB receptor feedback inhibitor 1 (459 aa).

S2 carries the post-translational modification N-acetylserine. T126 and T130 each carry phosphothreonine. A disordered region spans residues 227–352 (QNRVVPDPNP…VMPPTQSFAP (126 aa)). Phosphoserine is present on residues S250 and S271. The segment covering 264–273 (SSCTHRASPS) has biased composition (polar residues). Residues 282 to 291 (PPRVPIPPRP) are compositionally biased toward pro residues. S300 is modified (phosphoserine). A compositionally biased stretch (basic and acidic residues) spans 310 to 323 (DEDRPPKVPPREPL). Polar residues predominate over residues 324-335 (SRSNSRTPSPKS). The interaction with EGFR and ERBB2 and regulation of EGFR activation stretch occupies residues 332–361 (SPKSLPSYLNGVMPPTQSFAPDPKYVSSKA). S458 is subject to Phosphoserine.

Belongs to the MIG6 family. In terms of assembly, interacts with EGFR and ERBB2.

The protein localises to the cytoplasm. It localises to the cell membrane. The protein resides in the nucleus. Functionally, negative regulator of EGFR signaling in skin morphogenesis. Acts as a negative regulator for several EGFR family members, including ERBB2, ERBB3 and ERBB4. Inhibits EGFR catalytic activity by interfering with its dimerization. Inhibits autophosphorylation of EGFR, ERBB2 and ERBB4. Important for normal keratinocyte proliferation and differentiation. Plays a role in modulating the response to steroid hormones in the uterus. Required for normal response to progesterone in the uterus and for fertility. Mediates epithelial estrogen responses in the uterus by regulating ESR1 levels and activation. Important for regulation of endometrium cell proliferation. Important for normal prenatal and perinatal lung development. This Rattus norvegicus (Rat) protein is ERBB receptor feedback inhibitor 1 (Errfi1).